We begin with the raw amino-acid sequence, 186 residues long: Ribosome-recycling factor (186 aa).

The protein belongs to the RRF family.

The protein localises to the cytoplasm. Its function is as follows. Responsible for the release of ribosomes from messenger RNA at the termination of protein biosynthesis. May increase the efficiency of translation by recycling ribosomes from one round of translation to another. The protein is Ribosome-recycling factor of Paraburkholderia xenovorans (strain LB400).